A 429-amino-acid polypeptide reads, in one-letter code: 3-isopropylmalate dehydratase large subunit (429 aa).

Residues cysteine 303, cysteine 363, and cysteine 366 each coordinate [4Fe-4S] cluster.

This sequence belongs to the aconitase/IPM isomerase family. LeuC type 2 subfamily. Heterodimer of LeuC and LeuD. The cofactor is [4Fe-4S] cluster.

The enzyme catalyses (2R,3S)-3-isopropylmalate = (2S)-2-isopropylmalate. It functions in the pathway amino-acid biosynthesis; L-leucine biosynthesis; L-leucine from 3-methyl-2-oxobutanoate: step 2/4. Its function is as follows. Catalyzes the isomerization between 2-isopropylmalate and 3-isopropylmalate, via the formation of 2-isopropylmaleate. The protein is 3-isopropylmalate dehydratase large subunit of Caldicellulosiruptor bescii (strain ATCC BAA-1888 / DSM 6725 / KCTC 15123 / Z-1320) (Anaerocellum thermophilum).